We begin with the raw amino-acid sequence, 47 residues long: Small, acid-soluble spore protein N (47 aa).

Residues 1-47 are disordered; it reads MSNPRGNPKYFNPNHLGTQPRAAGGNKGKKMQDQSGQHAQVIQTKGE. Residues 33 to 47 are compositionally biased toward polar residues; that stretch reads DQSGQHAQVIQTKGE.

Belongs to the SspN family.

Its subcellular location is the spore core. This chain is Small, acid-soluble spore protein N, found in Geobacillus sp. (strain WCH70).